Consider the following 1117-residue polypeptide: DNA-directed RNA polymerase subunit beta (1117 aa).

The tract at residues 1094-1117 is disordered; that stretch reads QLARRTPPRPTYESLSRESLDDDE. The span at 1108–1117 shows a compositional bias: basic and acidic residues; sequence LSRESLDDDE.

Belongs to the RNA polymerase beta chain family. In cyanobacteria the RNAP catalytic core is composed of 2 alpha, 1 beta, 1 beta', 1 gamma and 1 omega subunit. When a sigma factor is associated with the core the holoenzyme is formed, which can initiate transcription.

It carries out the reaction RNA(n) + a ribonucleoside 5'-triphosphate = RNA(n+1) + diphosphate. DNA-dependent RNA polymerase catalyzes the transcription of DNA into RNA using the four ribonucleoside triphosphates as substrates. The sequence is that of DNA-directed RNA polymerase subunit beta from Trichormus variabilis (strain ATCC 29413 / PCC 7937) (Anabaena variabilis).